The primary structure comprises 446 residues: Glutamate--tRNA ligase 2 (446 aa).

A 'HIGH' region motif is present at residues 8–18 (PSPTGYLHIGN). The 'KMSKS' region motif lies at 239–243 (GLSKR). Position 242 (Lys-242) interacts with ATP.

The protein belongs to the class-I aminoacyl-tRNA synthetase family. Glutamate--tRNA ligase type 1 subfamily. As to quaternary structure, monomer.

The protein localises to the cytoplasm. It catalyses the reaction tRNA(Glu) + L-glutamate + ATP = L-glutamyl-tRNA(Glu) + AMP + diphosphate. Functionally, catalyzes the attachment of glutamate to tRNA(Glu) in a two-step reaction: glutamate is first activated by ATP to form Glu-AMP and then transferred to the acceptor end of tRNA(Glu). The protein is Glutamate--tRNA ligase 2 of Methylobacterium radiotolerans (strain ATCC 27329 / DSM 1819 / JCM 2831 / NBRC 15690 / NCIMB 10815 / 0-1).